A 43-amino-acid chain; its full sequence is Disintegrin CV (43 aa).

4 disulfides stabilise this stretch: C1/C10, C6/C29, C7/C34, and C19/C36. In terms of domain architecture, Disintegrin spans 1 to 43 (CTTGPCCRQCKLKPAGTTCWRTSVSSHYCTGRSCECPSYPGNG). A Cell attachment site; atypical (RTS) motif is present at residues 21-23 (RTS).

It belongs to the disintegrin family. Short disintegrin subfamily. As to quaternary structure, monomer. Expressed by the venom gland.

It is found in the secreted. Its function is as follows. Specifically interacts with the alpha-1/beta-1 integrin (ITGA1/ITGB1). Exhibits highly inhibitory effects on cell adhesion and cell migration to collagens I and IV. Also shows in vivo anti-angiogenic activity. The polypeptide is Disintegrin CV (Cerastes vipera (Sahara sand viper)).